The primary structure comprises 936 residues: Coiled-coil domain-containing protein 191 (936 aa).

2 coiled-coil regions span residues 189 to 270 (RLTM…VKAA) and 364 to 440 (RDYT…LQAA). A disordered region spans residues 495 to 541 (LGRTTTGNLQGSLQNVSLSAPGNKQHKTLGAEPSQQPGSNETLRTTS). Polar residues-rich tracts occupy residues 497–516 (RTTT…SAPG) and 527–541 (PSQQ…RTTS). Residues 554–592 (NRHVFQQQLIEKQKKKLQEQQKTILELKKNLQLAEAQWA) adopt a coiled-coil conformation. Disordered regions lie at residues 607 to 656 (LSKP…TPHP) and 691 to 714 (KAQE…RKRE). A coiled-coil region spans residues 662–739 (EERAIQRAEC…IKRNQQLEAI (78 aa)).

The chain is Coiled-coil domain-containing protein 191 (CCDC191) from Homo sapiens (Human).